An 812-amino-acid polypeptide reads, in one-letter code: Xaa-Pro dipeptidyl-peptidase (812 aa).

Active-site charge relay system residues include Ser-372, Asp-492, and His-523.

It belongs to the peptidase S15 family. In terms of assembly, homodimer.

It localises to the cytoplasm. The catalysed reaction is Hydrolyzes Xaa-Pro-|- bonds to release unblocked, N-terminal dipeptides from substrates including Ala-Pro-|-p-nitroanilide and (sequentially) Tyr-Pro-|-Phe-Pro-|-Gly-Pro-|-Ile.. Functionally, removes N-terminal dipeptides sequentially from polypeptides having unsubstituted N-termini provided that the penultimate residue is proline. The sequence is that of Xaa-Pro dipeptidyl-peptidase from Pediococcus pentosaceus (strain ATCC 25745 / CCUG 21536 / LMG 10740 / 183-1w).